The chain runs to 209 residues: Large ribosomal subunit protein uL4 (209 aa).

The disordered stretch occupies residues 44-77 (QRQGTHKSKERSEVSGSTRKLIRQKGGGGARRGD).

The protein belongs to the universal ribosomal protein uL4 family. Part of the 50S ribosomal subunit.

In terms of biological role, one of the primary rRNA binding proteins, this protein initially binds near the 5'-end of the 23S rRNA. It is important during the early stages of 50S assembly. It makes multiple contacts with different domains of the 23S rRNA in the assembled 50S subunit and ribosome. Its function is as follows. Forms part of the polypeptide exit tunnel. In Parabacteroides distasonis (strain ATCC 8503 / DSM 20701 / CIP 104284 / JCM 5825 / NCTC 11152), this protein is Large ribosomal subunit protein uL4.